The following is a 281-amino-acid chain: 4-diphosphocytidyl-2-C-methyl-D-erythritol kinase (281 aa).

The active site involves lysine 15. Position 98–108 (proline 98–serine 108) interacts with ATP. The active site involves aspartate 140.

It belongs to the GHMP kinase family. IspE subfamily.

The enzyme catalyses 4-CDP-2-C-methyl-D-erythritol + ATP = 4-CDP-2-C-methyl-D-erythritol 2-phosphate + ADP + H(+). Its pathway is isoprenoid biosynthesis; isopentenyl diphosphate biosynthesis via DXP pathway; isopentenyl diphosphate from 1-deoxy-D-xylulose 5-phosphate: step 3/6. Its function is as follows. Catalyzes the phosphorylation of the position 2 hydroxy group of 4-diphosphocytidyl-2C-methyl-D-erythritol. The protein is 4-diphosphocytidyl-2-C-methyl-D-erythritol kinase of Neisseria meningitidis serogroup C (strain 053442).